Reading from the N-terminus, the 512-residue chain is Cytochrome P450 monooxygenase adrA (512 aa).

Residues 12–32 (FEPVSLVGLVLLSGLFLLLTA) traverse the membrane as a helical segment. N-linked (GlcNAc...) asparagine glycosylation is found at N86, N149, and N210. Heme is bound at residue C453.

The protein belongs to the cytochrome P450 family. It depends on heme as a cofactor.

The protein localises to the membrane. It participates in secondary metabolite biosynthesis; terpenoid biosynthesis. In terms of biological role, cytochrome P450 monooxygenase; part of the gene cluster that mediates the biosynthesis of andrastins, meroterpenoid compounds that exhibit inhibitory activity against ras farnesyltransferase, suggesting that they could be promising leads for antitumor agents. The first step of the pathway is the synthesis of 3,5-dimethylorsellinic acid (DMOA) by the polyketide synthase adrD via condensation of one acetyl-CoA starter unit with 3 malonyl-CoA units and 2 methylations. DMAO is then converted to farnesyl-DMAO by the prenyltransferase adrG. The methyltransferase adrK catalyzes the methylation of the carboxyl group of farnesyl-DMAO to farnesyl-DMAO methyl ester which is further converted to epoxyfarnesyl-DMAO methyl ester by the FAD-dependent monooxygenase adrH. The terpene cyclase adrI then catalyzes the carbon skeletal rearrangement to generate the andrastin E, the first compound in the pathway having the andrastin scaffold, with the tetracyclic ring system. The post-cyclization tailoring enzymes adrF, adrE, adrJ, and adrA, are involved in the conversion of andrastin E into andrastin A. The short chain dehydrogenase adrF is responsible for the oxidation of the C-3 a hydroxyl group of andrastin E to yield the corresponding ketone, andrastin D. The ketoreductase adrE stereoselectively reduces the carbonyl moiety to reverse the stereochemistry of the C-3 position to yield andrastin F. The acetyltransferase adrJ is the acetyltransferase that attaches the acetyl group to the C-3 hydroxyl group of andrastin F to yield andrastin C. Finally, the cytochrome P450 monooxygenase adrA catalyzes two sequential oxidation reactions of the C-23 methyl group, to generate the corresponding alcohol andrastin B, and aldehyde andrastin A. The chain is Cytochrome P450 monooxygenase adrA from Penicillium rubens (strain ATCC 28089 / DSM 1075 / NRRL 1951 / Wisconsin 54-1255) (Penicillium chrysogenum).